The sequence spans 514 residues: Beta-secretase 2 (514 aa).

A signal peptide spans 1 to 20; sequence MGALLRALLLPLLAQWLLRA. A propeptide spanning residues 21 to 62 is cleaved from the precursor; sequence VPVLAPAPFTLPLQVAGAANHRASTVPGLGTPELPRADGLAL. Residues 21-469 are Extracellular-facing; that stretch reads VPVLAPAPFT…NEPILWIVSY (449 aa). The 338-residue stretch at 88–425 folds into the Peptidase A1 domain; sequence YYLEMLIGTP…DRAQRRVGFA (338 aa). The active site involves Asp-106. The N-linked (GlcNAc...) asparagine glycan is linked to Asn-166. Intrachain disulfides connect Cys-229/Cys-429, Cys-288/Cys-453, and Cys-340/Cys-389. Asp-299 is a catalytic residue. Residue Asn-362 is glycosylated (N-linked (GlcNAc...) asparagine). A helical transmembrane segment spans residues 470-490; sequence ALMSVCGAILLVLILLLLFPL. Topologically, residues 491–514 are cytoplasmic; it reads HCRHAPRDPEVVNDESSLVRHRWK.

It belongs to the peptidase A1 family. As to quaternary structure, monomer. Interacts with RTN3 and RTN4. In terms of processing, undergoes autoproteolytic cleavage. Glycosylated.

It localises to the cell membrane. The protein localises to the golgi apparatus. Its subcellular location is the endoplasmic reticulum. It is found in the endosome. The protein resides in the melanosome. It carries out the reaction Broad endopeptidase specificity. Cleaves Glu-Val-Asn-Leu-|-Asp-Ala-Glu-Phe in the Swedish variant of Alzheimer's amyloid precursor protein.. Functionally, responsible for the proteolytic processing of the amyloid precursor protein (APP). Cleaves APP, between residues 690 and 691, leading to the generation and extracellular release of beta-cleaved soluble APP, and a corresponding cell-associated C-terminal fragment which is later released by gamma-secretase. It has also been shown that it can cleave APP between residues 671 and 672. Involved in the proteolytic shedding of PMEL at early stages of melanosome biogenesis. Cleaves PMEL within the M-beta fragment to release the amyloidogenic PMEL luminal fragment containing M-alpha and a small portion of M-beta N-terminus. This is a prerequisite step for subsequent processing and assembly of PMEL fibrils into amyloid sheets. Responsible also for the proteolytic processing of CLTRN in pancreatic beta cells. This Rattus norvegicus (Rat) protein is Beta-secretase 2 (Bace2).